Consider the following 252-residue polypeptide: Phosphoglycolate phosphatase (252 aa).

Asp13 serves as the catalytic Nucleophile. Asp13, Asp15, and Asp192 together coordinate Mg(2+).

This sequence belongs to the HAD-like hydrolase superfamily. CbbY/CbbZ/Gph/YieH family. As to quaternary structure, monomer. Mg(2+) serves as cofactor. Chloride is required as a cofactor.

The enzyme catalyses 2-phosphoglycolate + H2O = glycolate + phosphate. Its pathway is organic acid metabolism; glycolate biosynthesis; glycolate from 2-phosphoglycolate: step 1/1. In terms of biological role, specifically catalyzes the dephosphorylation of 2-phosphoglycolate. Is involved in the dissimilation of the intracellular 2-phosphoglycolate formed during the DNA repair of 3'-phosphoglycolate ends, a major class of DNA lesions induced by oxidative stress. The protein is Phosphoglycolate phosphatase of Shigella sonnei (strain Ss046).